Reading from the N-terminus, the 508-residue chain is Transcription termination factor MTERF4, chloroplastic (508 aa).

Residues 1–79 (MMKSLFLFSA…PSLLDMERGR (79 aa)) constitute a chloroplast transit peptide. Over residues 28–49 (RLTASASTSASSPPRAGCSRGP) the composition is skewed to low complexity. 2 disordered regions span residues 28–69 (RLTA…LYAR) and 475–508 (FDTN…EFIE). The segment covering 484–508 (VEDEVEDEDLDEDSDYDSTDDEFIE) has biased composition (acidic residues).

Belongs to the mTERF family.

Its subcellular location is the plastid. It localises to the chloroplast stroma. Functionally, transcription termination factor required for processing and steady-state levels of plastid transcripts. Required for splicing of the chloroplastic group II intron. Required for the accumulation of 16S and 23S ribosomes. This Oryza sativa subsp. japonica (Rice) protein is Transcription termination factor MTERF4, chloroplastic.